Reading from the N-terminus, the 262-residue chain is Indole-3-glycerol phosphate synthase (262 aa).

Belongs to the TrpC family.

It catalyses the reaction 1-(2-carboxyphenylamino)-1-deoxy-D-ribulose 5-phosphate + H(+) = (1S,2R)-1-C-(indol-3-yl)glycerol 3-phosphate + CO2 + H2O. It participates in amino-acid biosynthesis; L-tryptophan biosynthesis; L-tryptophan from chorismate: step 4/5. The protein is Indole-3-glycerol phosphate synthase of Chlorobium luteolum (strain DSM 273 / BCRC 81028 / 2530) (Pelodictyon luteolum).